We begin with the raw amino-acid sequence, 284 residues long: Cysteine-rich repeat secretory protein 8 (284 aa).

An N-terminal signal peptide occupies residues 1 to 27 (MATFIRFTAPLFCFFFLFSLFSHQTMS). Gnk2-homologous domains are found at residues 32–136 (MATF…NVSF) and 151–259 (SLAT…TTGL).

This sequence belongs to the cysteine-rich repeat secretory protein family.

It is found in the secreted. This is Cysteine-rich repeat secretory protein 8 (CRRSP8) from Arabidopsis thaliana (Mouse-ear cress).